The chain runs to 300 residues: Type II restriction enzyme HindIII (300 aa).

It carries out the reaction Endonucleolytic cleavage of DNA to give specific double-stranded fragments with terminal 5'-phosphates.. Its function is as follows. A P subtype restriction enzyme that recognizes the double-stranded sequence 5'-AAGCTT-3' and cleaves after A-1. The polypeptide is Type II restriction enzyme HindIII (Haemophilus influenzae (strain ATCC 51907 / DSM 11121 / KW20 / Rd)).